The sequence spans 297 residues: Phosphatidylserine decarboxylase proenzyme (297 aa).

Residues aspartate 92, histidine 149, and serine 254 each act as charge relay system; for autoendoproteolytic cleavage activity in the active site. Serine 254 serves as the catalytic Schiff-base intermediate with substrate; via pyruvic acid; for decarboxylase activity. Position 254 is a pyruvic acid (Ser); by autocatalysis (serine 254).

The protein belongs to the phosphatidylserine decarboxylase family. PSD-B subfamily. Prokaryotic type I sub-subfamily. In terms of assembly, heterodimer of a large membrane-associated beta subunit and a small pyruvoyl-containing alpha subunit. Requires pyruvate as cofactor. Is synthesized initially as an inactive proenzyme. Formation of the active enzyme involves a self-maturation process in which the active site pyruvoyl group is generated from an internal serine residue via an autocatalytic post-translational modification. Two non-identical subunits are generated from the proenzyme in this reaction, and the pyruvate is formed at the N-terminus of the alpha chain, which is derived from the carboxyl end of the proenzyme. The autoendoproteolytic cleavage occurs by a canonical serine protease mechanism, in which the side chain hydroxyl group of the serine supplies its oxygen atom to form the C-terminus of the beta chain, while the remainder of the serine residue undergoes an oxidative deamination to produce ammonia and the pyruvoyl prosthetic group on the alpha chain. During this reaction, the Ser that is part of the protease active site of the proenzyme becomes the pyruvoyl prosthetic group, which constitutes an essential element of the active site of the mature decarboxylase.

Its subcellular location is the cell membrane. The catalysed reaction is a 1,2-diacyl-sn-glycero-3-phospho-L-serine + H(+) = a 1,2-diacyl-sn-glycero-3-phosphoethanolamine + CO2. It functions in the pathway phospholipid metabolism; phosphatidylethanolamine biosynthesis; phosphatidylethanolamine from CDP-diacylglycerol: step 2/2. In terms of biological role, catalyzes the formation of phosphatidylethanolamine (PtdEtn) from phosphatidylserine (PtdSer). In Bordetella parapertussis (strain 12822 / ATCC BAA-587 / NCTC 13253), this protein is Phosphatidylserine decarboxylase proenzyme.